Consider the following 333-residue polypeptide: Biotin synthase (333 aa).

One can recognise a Radical SAM core domain in the interval tyrosine 47–alanine 273. The [4Fe-4S] cluster site is built by cysteine 65, cysteine 69, and cysteine 72. 4 residues coordinate [2Fe-2S] cluster: cysteine 109, cysteine 141, cysteine 201, and arginine 271.

It belongs to the radical SAM superfamily. Biotin synthase family. Homodimer. [4Fe-4S] cluster is required as a cofactor. The cofactor is [2Fe-2S] cluster.

The enzyme catalyses (4R,5S)-dethiobiotin + (sulfur carrier)-SH + 2 reduced [2Fe-2S]-[ferredoxin] + 2 S-adenosyl-L-methionine = (sulfur carrier)-H + biotin + 2 5'-deoxyadenosine + 2 L-methionine + 2 oxidized [2Fe-2S]-[ferredoxin]. Its pathway is cofactor biosynthesis; biotin biosynthesis; biotin from 7,8-diaminononanoate: step 2/2. Functionally, catalyzes the conversion of dethiobiotin (DTB) to biotin by the insertion of a sulfur atom into dethiobiotin via a radical-based mechanism. The polypeptide is Biotin synthase (Geobacillus kaustophilus (strain HTA426)).